A 285-amino-acid chain; its full sequence is Urease accessory protein UreD 1 (285 aa).

This sequence belongs to the UreD family. UreD, UreF and UreG form a complex that acts as a GTP-hydrolysis-dependent molecular chaperone, activating the urease apoprotein by helping to assemble the nickel containing metallocenter of UreC. The UreE protein probably delivers the nickel.

It localises to the cytoplasm. In terms of biological role, required for maturation of urease via the functional incorporation of the urease nickel metallocenter. The polypeptide is Urease accessory protein UreD 1 (Pseudomonas syringae pv. tomato (strain ATCC BAA-871 / DC3000)).